The chain runs to 62 residues: Coiled-coil domain-containing protein YLR146W-A (62 aa).

A coiled-coil region spans residues 14–49 (EHARMLQNEIQQLFAQLRDTNSQIRCDLNEFEQIKE).

The polypeptide is Coiled-coil domain-containing protein YLR146W-A (Saccharomyces cerevisiae (strain ATCC 204508 / S288c) (Baker's yeast)).